A 241-amino-acid polypeptide reads, in one-letter code: Aspartate/glutamate leucyltransferase (241 aa).

Belongs to the R-transferase family. Bpt subfamily.

The protein localises to the cytoplasm. The enzyme catalyses N-terminal L-glutamyl-[protein] + L-leucyl-tRNA(Leu) = N-terminal L-leucyl-L-glutamyl-[protein] + tRNA(Leu) + H(+). It catalyses the reaction N-terminal L-aspartyl-[protein] + L-leucyl-tRNA(Leu) = N-terminal L-leucyl-L-aspartyl-[protein] + tRNA(Leu) + H(+). Functions in the N-end rule pathway of protein degradation where it conjugates Leu from its aminoacyl-tRNA to the N-termini of proteins containing an N-terminal aspartate or glutamate. The chain is Aspartate/glutamate leucyltransferase from Parvibaculum lavamentivorans (strain DS-1 / DSM 13023 / NCIMB 13966).